A 261-amino-acid polypeptide reads, in one-letter code: Tryptophan synthase alpha chain (261 aa).

Residues Glu47 and Asp58 each act as proton acceptor in the active site.

The protein belongs to the TrpA family. As to quaternary structure, tetramer of two alpha and two beta chains.

The catalysed reaction is (1S,2R)-1-C-(indol-3-yl)glycerol 3-phosphate + L-serine = D-glyceraldehyde 3-phosphate + L-tryptophan + H2O. Its pathway is amino-acid biosynthesis; L-tryptophan biosynthesis; L-tryptophan from chorismate: step 5/5. In terms of biological role, the alpha subunit is responsible for the aldol cleavage of indoleglycerol phosphate to indole and glyceraldehyde 3-phosphate. The chain is Tryptophan synthase alpha chain from Neisseria meningitidis serogroup A / serotype 4A (strain DSM 15465 / Z2491).